Reading from the N-terminus, the 224-residue chain is Ribosome maturation factor RimP (224 aa).

Residues R194 to E224 form a disordered region. The segment covering L203 to D213 has biased composition (acidic residues).

The protein belongs to the RimP family.

Its subcellular location is the cytoplasm. In terms of biological role, required for maturation of 30S ribosomal subunits. The polypeptide is Ribosome maturation factor RimP (Brucella anthropi (strain ATCC 49188 / DSM 6882 / CCUG 24695 / JCM 21032 / LMG 3331 / NBRC 15819 / NCTC 12168 / Alc 37) (Ochrobactrum anthropi)).